Reading from the N-terminus, the 584-residue chain is Galectin-3-binding protein (584 aa).

The N-terminal stretch at 1-18 (MTPPRLFWVWLLVAGTQG) is a signal peptide. The 101-residue stretch at 24 to 124 (MRLADGGATN…HERDAGVVCT (101 aa)) folds into the SRCR domain. 3 disulfide bridges follow: Cys49–Cys113, Cys62–Cys123, and Cys93–Cys103. An N-linked (GlcNAc...) asparagine glycan is attached at Asn69. N-linked (GlcNAc...) asparagine glycans are attached at residues Asn125 and Asn192. A BTB domain is found at 153 to 221 (CDLSISVNVQ…FYSRRIDITL (69 aa)). The BACK domain maps to 260 to 359 (PLDLYAYAVA…MLPEELFELQ (100 aa)). Asn361, Asn397, Asn550, and Asn579 each carry an N-linked (GlcNAc...) asparagine glycan.

Homodimers and homomultimers. The multimers form ring-like structures with a diameter of 30-40 nm. Binds LGALS1 and LGALS3. Binds ITGB1, COL4A1, COL5A1, COL6A1, FN1 and NID. Interacts with the gamma-tubulin ring complex (gamma-TuRC), composed of gamma-tubulin, TUBGCP2, TUBGCP3, TUBGCP4, TUBGCP5 and TUBGCP6. The unglycosylated form interacts with PDE4DIP; this interaction, which is PDE4DIP isoform-specific, may connect a pericentrosomal complex, made of AKAP9, CDK5RAP2, EB1/MAPRE1 and PDE4DIP, to the gamma-tubulin ring complex (gamma-TuRC) to promote microtubule assembly and acetylation.

Its subcellular location is the secreted. It is found in the extracellular space. The protein resides in the extracellular matrix. Functionally, promotes integrin-mediated cell adhesion. May stimulate host defense against viruses and tumor cells. The sequence is that of Galectin-3-binding protein (LGALS3BP) from Pongo abelii (Sumatran orangutan).